Reading from the N-terminus, the 192-residue chain is Ion-translocating oxidoreductase complex subunit A (192 aa).

The next 6 helical transmembrane spans lie at 5–25 (LLLLISTVLVNNFVLVKFLGL), 39–59 (IGMSMATTFVLTLASILSYLV), 65–85 (LPFDLSYLRTMSFILVIAVVV), 102–122 (ALGIYLPLITTNCAVLGVALL), 134–154 (AIYGFGAAVGFSLVLILFSAM), and 171–191 (AIAMITAGLMSLAFMGFTGLV).

The protein belongs to the NqrDE/RnfAE family. In terms of assembly, the complex is composed of six subunits: RnfA, RnfB, RnfC, RnfD, RnfE and RnfG.

The protein resides in the cell inner membrane. Functionally, part of a membrane-bound complex that couples electron transfer with translocation of ions across the membrane. The protein is Ion-translocating oxidoreductase complex subunit A of Shewanella sp. (strain ANA-3).